A 1969-amino-acid chain; its full sequence is Echinoderm microtubule-associated protein-like 5 (1969 aa).

WD repeat units follow at residues 59–100 (GHSD…TISV), 104–145 (VHTH…MLSM), 148–187 (GHTD…LTPK), 195–233 (GDLQ…RTIQ), 235–273 (AHAA…TVID), 280–321 (GYKG…LIMQ), 323–362 (HCEG…LIAR), 406–445 (DRKE…KKVG), 449–488 (GSLS…EVTS), and 561–601 (GHSA…KLKD). A disordered region spans residues 609 to 633 (ESLADSHSDESDSDLSDVPELDSEI). Residues 619–633 (SDSDLSDVPELDSEI) show a composition bias toward acidic residues. WD repeat units lie at residues 725-766 (GHDD…PLSI), 770-811 (HHQY…KLSI), 814-853 (GSKD…LIGR), 861-900 (GKND…KTVK), 901-940 (AHDG…KTYA), 996-1035 (HMEG…CMLA), 1038-1077 (KLKK…DLVS), 1080-1120 (HRKD…RVGI), and 1236-1276 (AHST…YREK). Disordered regions lie at residues 1274–1297 (REKR…YDSD) and 1326–1355 (QQKE…NVGK). The span at 1281-1294 (SEESDIDSEEDGGY) shows a compositional bias: acidic residues. Positions 1326–1337 (QQKEPSIDERPP) are enriched in basic and acidic residues. WD repeat units lie at residues 1412–1463 (EHND…TLSI), 1467–1508 (YHSK…KIAS), 1511–1550 (GHNQ…LLSK), 1560–1598 (ARMQ…RIVA), 1600–1646 (AHNG…RAFR), 1691–1731 (GHVD…MLNK), 1733–1774 (NLGH…GKKR), 1775–1814 (DRRC…TLNR), 1887–1926 (AEKA…KFAK), and 1932–1969 (GHSP…HTPH).

Belongs to the WD repeat EMAP family.

It is found in the cytoplasm. It localises to the cytoskeleton. In terms of biological role, may modify the assembly dynamics of microtubules, such that microtubules are slightly longer, but more dynamic. The chain is Echinoderm microtubule-associated protein-like 5 (EML5) from Homo sapiens (Human).